The primary structure comprises 533 residues: Cytochrome P450 monooxygenase ltmK (533 aa).

Residues 27–47 traverse the membrane as a helical segment; it reads VHWLQVIVALLVLIVCIFLYW. Asparagine 116 carries an N-linked (GlcNAc...) asparagine glycan. Cysteine 473 is a heme binding site. N-linked (GlcNAc...) asparagine glycosylation is present at asparagine 528.

This sequence belongs to the cytochrome P450 family. Heme is required as a cofactor.

It is found in the membrane. Its pathway is secondary metabolite biosynthesis. Its function is as follows. Cytochrome P450 monooxygenase; part of the gene clusters that mediates the biosynthesis of lolitrems, indole-diterpene mycotoxins that are potent tremorgens in mammals, and are synthesized by clavicipitaceous fungal endophytes in association with their grass hosts. The geranylgeranyl diphosphate (GGPP) synthase ltmG is proposed to catalyze the first step in lolitrem biosynthesis. LtmG catalyzes a series of iterative condensations of isopentenyl diphosphate (IPP) with dimethylallyl diphosphate (DMAPP), geranyl diphosphate (GPP), and farnesyl diphosphate (FPP), to form GGPP. GGPP then condenses with indole-3-glycerol phosphate to form 3-geranylgeranylindole, an acyclic intermediate, to be incorporated into paxilline. Either ltmG or ltmC could be responsible for this step, as both are putative prenyl transferases. The FAD-dependent monooxygenase ltmM then catalyzes the epoxidation of the two terminal alkenes of the geranylgeranyl moiety, which is subsequently cyclized by ltmB, to paspaline. The cytochrome P450 monooxygenases ltmQ and ltmP can sequentially oxidize paspaline to terpendole E and terpendole F. Alternatively, ltmP converts paspaline to an intermediate which is oxidized by ltmQ to terpendole F. LtmF, ltmK, ltmE and ltmJ appear to be unique to the epichloe endophytes. The prenyltransferase ltmF is involved in the 27-hydroxyl-O-prenylation. The cytochrome P450 monooxygenase ltmK is required for the oxidative acetal ring formation. The multi-functional prenyltransferase ltmE is required for C20- and C21-prenylations of the indole ring of paspalanes and acts together with the cytochrome P450 monooxygenase ltmJ to yield lolitremanes by multiple oxidations and ring closures. The stereoisomer pairs of lolitriol and lolitrem N or lolitrem B and lolitrem F may be attributed to variations in the way in which ring closure can occur under the action of ltmJ. While the major product of this pathway is lolitrem B, the prenyl transferases and cytochrome P450 monooxygenases identified in this pathway have a remarkable versatility in their regio- and stereo-specificities to generate a diverse range of metabolites that are products of a metabolic grid rather than a linear pathway. The protein is Cytochrome P450 monooxygenase ltmK of Epichloe festucae var. lolii (Neotyphodium lolii).